A 181-amino-acid polypeptide reads, in one-letter code: Small ribosomal subunit protein bS16 (181 aa).

Positions Lys150–Glu181 are disordered. A compositionally biased stretch (low complexity) spans Lys158 to Glu181.

Belongs to the bacterial ribosomal protein bS16 family.

The chain is Small ribosomal subunit protein bS16 from Bacteroides fragilis (strain YCH46).